Consider the following 245-residue polypeptide: Thiopurine S-methyltransferase (245 aa).

S14 carries the post-translational modification Phosphoserine. 29–40 (WREKWVDGKIGF) lines the S-adenosyl-L-methionine pocket. A substrate-binding site is contributed by F40. K58 carries the N6-acetyllysine modification. S-adenosyl-L-methionine contacts are provided by L69, E90, and R152.

The protein belongs to the class I-like SAM-binding methyltransferase superfamily. TPMT family. Monomer.

The protein resides in the cytoplasm. The catalysed reaction is S-adenosyl-L-methionine + a thiopurine = S-adenosyl-L-homocysteine + a thiopurine S-methylether.. The polypeptide is Thiopurine S-methyltransferase (TPMT) (Panthera tigris (Tiger)).